The following is a 117-amino-acid chain: Small ribosomal subunit protein uS17 (117 aa).

The protein belongs to the universal ribosomal protein uS17 family. Part of the 30S ribosomal subunit.

One of the primary rRNA binding proteins, it binds specifically to the 5'-end of 16S ribosomal RNA. This is Small ribosomal subunit protein uS17 from Methanocaldococcus jannaschii (strain ATCC 43067 / DSM 2661 / JAL-1 / JCM 10045 / NBRC 100440) (Methanococcus jannaschii).